Reading from the N-terminus, the 180-residue chain is ATP-dependent protease subunit HslV (180 aa).

Threonine 5 is a catalytic residue. Na(+) is bound by residues glycine 165, cysteine 168, and threonine 171.

Belongs to the peptidase T1B family. HslV subfamily. A double ring-shaped homohexamer of HslV is capped on each side by a ring-shaped HslU homohexamer. The assembly of the HslU/HslV complex is dependent on binding of ATP.

It localises to the cytoplasm. The enzyme catalyses ATP-dependent cleavage of peptide bonds with broad specificity.. With respect to regulation, allosterically activated by HslU binding. Functionally, protease subunit of a proteasome-like degradation complex believed to be a general protein degrading machinery. In Helicobacter pylori (strain G27), this protein is ATP-dependent protease subunit HslV.